The following is a 473-amino-acid chain: ATP synthase subunit beta (473 aa).

156–163 (GGAGVGKT) contributes to the ATP binding site.

It belongs to the ATPase alpha/beta chains family. In terms of assembly, F-type ATPases have 2 components, CF(1) - the catalytic core - and CF(0) - the membrane proton channel. CF(1) has five subunits: alpha(3), beta(3), gamma(1), delta(1), epsilon(1). CF(0) has three main subunits: a(1), b(2) and c(9-12). The alpha and beta chains form an alternating ring which encloses part of the gamma chain. CF(1) is attached to CF(0) by a central stalk formed by the gamma and epsilon chains, while a peripheral stalk is formed by the delta and b chains.

It localises to the cell inner membrane. The catalysed reaction is ATP + H2O + 4 H(+)(in) = ADP + phosphate + 5 H(+)(out). Its function is as follows. Produces ATP from ADP in the presence of a proton gradient across the membrane. The catalytic sites are hosted primarily by the beta subunits. This chain is ATP synthase subunit beta, found in Desulfovibrio desulfuricans (strain ATCC 27774 / DSM 6949 / MB).